Consider the following 374-residue polypeptide: Isocitrate dehydrogenase [NAD] catalytic subunit 6, mitochondrial (374 aa).

Residues 1–44 (MTMTAFLARRLIGNGSSQILGTSSSSSGPFISVSRAFFSSSTPI) constitute a mitochondrion transit peptide. Substrate is bound by residues Arg127, Arg137, Arg158, and Asp245. Residues Asp245, Asp269, and Asp273 each coordinate Mg(2+).

Belongs to the isocitrate and isopropylmalate dehydrogenases family. In terms of assembly, heterooligomer of catalytic and regulatory subunits. Requires Mg(2+) as cofactor. Mn(2+) is required as a cofactor. In terms of tissue distribution, ubiquitous. Predominantly expressed in leaves.

Its subcellular location is the mitochondrion. The enzyme catalyses D-threo-isocitrate + NAD(+) = 2-oxoglutarate + CO2 + NADH. In terms of biological role, catalytic subunit of the NAD(+)-dependent isocitrate dehydrogenase involved in the oxidative decarboxylation of isocitrate to 2-oxoglutarate. Performs an essential role in the oxidative function of the citric acid cycle. The protein is Isocitrate dehydrogenase [NAD] catalytic subunit 6, mitochondrial (IDH6) of Arabidopsis thaliana (Mouse-ear cress).